The chain runs to 325 residues: Sel1-repeat-containing protein YbeQ (325 aa).

8 Sel1-like repeats span residues 26–61 (EAQY…EQGH), 63–97 (EAQY…LQGH), 103–130 (ALGW…AESG), 132–167 (SYAQ…LQGH), 168–203 (SDAQ…QQGN), 205–239 (HAQF…AQGS), 242–275 (AYVN…ECND), and 280–305 (YNLA…LYRK).

This sequence to E.coli YbeT.

The protein is Sel1-repeat-containing protein YbeQ (ybeQ) of Escherichia coli (strain K12).